Reading from the N-terminus, the 851-residue chain is Beta-galactosidase 3 (851 aa).

The N-terminal stretch at 1-29 (MAGASSYFSLRRLLLLLLPLVPLLGATTA) is a signal peptide. N-linked (GlcNAc...) asparagine glycosylation occurs at asparagine 35. Glutamate 194 acts as the Proton donor in catalysis. Catalysis depends on glutamate 263, which acts as the Nucleophile. Asparagine 361, asparagine 475, asparagine 528, and asparagine 533 each carry an N-linked (GlcNAc...) asparagine glycan. In terms of domain architecture, SUEL-type lectin spans 765 to 851 (GRDAAKVQLS…KTLAIEADCS (87 aa)).

Belongs to the glycosyl hydrolase 35 family.

It is found in the secreted. The protein localises to the extracellular space. The protein resides in the apoplast. It catalyses the reaction Hydrolysis of terminal non-reducing beta-D-galactose residues in beta-D-galactosides.. This Oryza sativa subsp. japonica (Rice) protein is Beta-galactosidase 3.